The chain runs to 432 residues: Phosphomethylpyrimidine synthase (432 aa).

Residues Asn66, Met95, Tyr124, His163, 185–187 (SRG), 226–229 (DGLR), and Glu265 each bind substrate. His269 provides a ligand contact to Zn(2+). Substrate is bound at residue Tyr292. A Zn(2+)-binding site is contributed by His333. 3 residues coordinate [4Fe-4S] cluster: Cys409, Cys412, and Cys416.

It belongs to the ThiC family. [4Fe-4S] cluster is required as a cofactor.

The enzyme catalyses 5-amino-1-(5-phospho-beta-D-ribosyl)imidazole + S-adenosyl-L-methionine = 4-amino-2-methyl-5-(phosphooxymethyl)pyrimidine + CO + 5'-deoxyadenosine + formate + L-methionine + 3 H(+). Its pathway is cofactor biosynthesis; thiamine diphosphate biosynthesis. Functionally, catalyzes the synthesis of the hydroxymethylpyrimidine phosphate (HMP-P) moiety of thiamine from aminoimidazole ribotide (AIR) in a radical S-adenosyl-L-methionine (SAM)-dependent reaction. The sequence is that of Phosphomethylpyrimidine synthase from Thermoanaerobacter pseudethanolicus (strain ATCC 33223 / 39E) (Clostridium thermohydrosulfuricum).